A 341-amino-acid polypeptide reads, in one-letter code: Serine/threonine-protein kinase-like protein At5g23170 (341 aa).

Residues 16–298 (FSPSKLIGKG…FGEITAEIVA (283 aa)) form the Protein kinase domain. ATP is bound by residues 22–30 (IGKGSHGYV) and K51. The segment at 52 to 75 (TPSSLSPSSPSSSSSSKSEQTKKL) is disordered. Positions 53–69 (PSSLSPSSPSSSSSSKS) are enriched in low complexity. Residue D153 is the Proton acceptor of the active site. A coiled-coil region spans residues 311–332 (MSVLRRVVKLKRRKKRLRETLT).

Belongs to the protein kinase superfamily. Ser/Thr protein kinase family. As to expression, ubiquitous. Higher expression in mature stamina and pollen.

It catalyses the reaction L-seryl-[protein] + ATP = O-phospho-L-seryl-[protein] + ADP + H(+). The enzyme catalyses L-threonyl-[protein] + ATP = O-phospho-L-threonyl-[protein] + ADP + H(+). This is Serine/threonine-protein kinase-like protein At5g23170 from Arabidopsis thaliana (Mouse-ear cress).